Consider the following 120-residue polypeptide: C-C motif chemokine 23 (120 aa).

A signal peptide spans 1–21; it reads MKVSVAALSCLMLVTALGSQA. Disulfide bonds link Cys-54–Cys-78, Cys-55–Cys-94, and Cys-65–Cys-105.

It belongs to the intercrine beta (chemokine CC) family. In terms of processing, the N-terminal is proteolytically cleaved by proteases associated with inflammatory responses. The processed forms, CCL23(19-99), CCL23(22-99), CCL23(27-99) and CCL23(30-99) exhibit increase in CCR1-mediated signaling and chemotaxis assays in vitro. As to expression, high levels in adult lung, liver, skeletal muscle and pancreas. Moderate levels in fetal liver, adult bone marrow and placenta. The short form is the major species and the longer form was detected only in very low abundance. CCL23(19-99), CCL23(22-99), CCL23(27-99), CCL23(30-99) are found in high levels in synovial fluids from rheumatoid patients.

The protein localises to the secreted. In terms of biological role, shows chemotactic activity for monocytes, resting T-lymphocytes, and neutrophils, but not for activated lymphocytes. Inhibits proliferation of myeloid progenitor cells in colony formation assays. This protein can bind heparin. Binds CCR1. CCL23(19-99), CCL23(22-99), CCL23(27-99), CCL23(30-99) are more potent chemoattractants than CCL23. This Homo sapiens (Human) protein is C-C motif chemokine 23 (CCL23).